The primary structure comprises 310 residues: Transcriptional activator BRRF1 (310 aa).

This sequence belongs to the lymphocryptovirus BBRF1 family.

Functionally, enhances the ability of BRLF1 to induce lytic infection by cooperating with it to transcriptionally activate the BZLF1 promoter. This chain is Transcriptional activator BRRF1, found in Epstein-Barr virus (strain AG876) (HHV-4).